Reading from the N-terminus, the 1868-residue chain is Dedicator of cytokinesis protein 5 (1868 aa).

Positions 8-69 constitute an SH3 domain; the sequence is KRQKYGVAIY…PETYIHLKEA (62 aa). Serine 365 carries the phosphoserine modification. Positions 443 to 627 constitute a C2 DOCK-type domain; it reads RNDIYVTLIH…DSFQIATLIC (185 aa). At lysine 818 the chain carries N6-acetyllysine. The DOCKER domain occupies 1231–1642; it reads YKDKKREDIY…VEKLYGVITL (412 aa). Positions 1681–1692 are enriched in low complexity; the sequence is STSSNSSDNASS. 2 disordered regions span residues 1681 to 1730 and 1742 to 1868; these read STSS…RISK and QVIA…PGSQ. Over residues 1704-1728 the composition is skewed to basic and acidic residues; it reads LFERRASSGARVEDLPPKEDSENRI. Phosphoserine is present on residues serine 1755, serine 1765, serine 1771, serine 1784, and serine 1788. Threonine 1793 is modified (phosphothreonine). Residues 1796 to 1810 show a composition bias toward polar residues; that stretch reads ATRTLSSPSLQTDGL. Phosphoserine is present on residues serine 1832 and serine 1867.

The protein belongs to the DOCK family. As to quaternary structure, interacts with CRK and CRKL. Interacts (via N-terminus) with tensin TNS3 (via N-terminus); the interaction increases DOCK5 guanine nucleotide exchange activity towards Rac. Interacts with ELMO1. Highly expressed in lens, where it predominantly localizes to anterior epithelial cells, and is weakly expressed in lens fiber (at protein level). Expressed in brain, eye, lung, spleen and kidney, but not in thymus or peripheral blood leukocytes.

The protein localises to the cytoplasm. It is found in the cell membrane. It localises to the cell projection. Its subcellular location is the podosome. Its function is as follows. Guanine nucleotide exchange factor (GEF) for Rho and Rac. GEF proteins activate small GTPases by exchanging bound GDP for free GTP. Along with DOCK1, mediates CRK/CRKL regulation of epithelial and endothelial cell spreading and migration on type IV collagen. The protein is Dedicator of cytokinesis protein 5 of Mus musculus (Mouse).